The following is a 516-amino-acid chain: AMP phosphorylase (516 aa).

Residues glycine 169, 195–200 (SRAITG), and threonine 204 contribute to the AMP site. Aspartate 257 acts as the Proton donor in catalysis. AMP contacts are provided by serine 265 and lysine 289.

Belongs to the thymidine/pyrimidine-nucleoside phosphorylase family. Type 2 subfamily.

The enzyme catalyses AMP + phosphate = alpha-D-ribose 1,5-bisphosphate + adenine. It catalyses the reaction CMP + phosphate = cytosine + alpha-D-ribose 1,5-bisphosphate. The catalysed reaction is UMP + phosphate = alpha-D-ribose 1,5-bisphosphate + uracil. Functionally, catalyzes the conversion of AMP and phosphate to adenine and ribose 1,5-bisphosphate (R15P). Exhibits phosphorylase activity toward CMP and UMP in addition to AMP. Functions in an archaeal AMP degradation pathway, together with R15P isomerase and RubisCO. The sequence is that of AMP phosphorylase from Methanospirillum hungatei JF-1 (strain ATCC 27890 / DSM 864 / NBRC 100397 / JF-1).